A 319-amino-acid chain; its full sequence is Thiamine pyrophosphokinase (319 aa).

Serine 2 carries the N-acetylserine modification.

This sequence belongs to the thiamine pyrophosphokinase family. In terms of assembly, homodimer.

The enzyme catalyses thiamine + ATP = thiamine diphosphate + AMP + H(+). Its pathway is cofactor biosynthesis; thiamine diphosphate biosynthesis; thiamine diphosphate from thiamine: step 1/1. Functionally, essential protein, it is the only enzyme in yeast capable of synthesizing thiamine pyrophosphate (TPP). The polypeptide is Thiamine pyrophosphokinase (Saccharomyces cerevisiae (strain ATCC 204508 / S288c) (Baker's yeast)).